The primary structure comprises 337 residues: tRNA N6-adenosine threonylcarbamoyltransferase (337 aa).

2 residues coordinate Fe cation: His-111 and His-115. Substrate is bound by residues 134–138 (LVSGG), Asp-167, Gly-180, and Asn-272. Asp-300 provides a ligand contact to Fe cation.

Belongs to the KAE1 / TsaD family. The cofactor is Fe(2+).

Its subcellular location is the cytoplasm. It catalyses the reaction L-threonylcarbamoyladenylate + adenosine(37) in tRNA = N(6)-L-threonylcarbamoyladenosine(37) in tRNA + AMP + H(+). In terms of biological role, required for the formation of a threonylcarbamoyl group on adenosine at position 37 (t(6)A37) in tRNAs that read codons beginning with adenine. Is involved in the transfer of the threonylcarbamoyl moiety of threonylcarbamoyl-AMP (TC-AMP) to the N6 group of A37, together with TsaE and TsaB. TsaD likely plays a direct catalytic role in this reaction. The chain is tRNA N6-adenosine threonylcarbamoyltransferase from Pseudoalteromonas translucida (strain TAC 125).